Consider the following 241-residue polypeptide: 6-hydroxymethyl-7,8-dihydropterin pyrophosphokinase (241 aa).

The protein belongs to the archaeal 6-HMPDK family. Mg(2+) serves as cofactor.

It catalyses the reaction 6-hydroxymethyl-7,8-dihydropterin + ATP = (7,8-dihydropterin-6-yl)methyl diphosphate + AMP + H(+). The protein operates within cofactor biosynthesis; 5,6,7,8-tetrahydromethanopterin biosynthesis. Catalyzes the transfer of diphosphate from ATP to 6-hydroxymethyl-7,8-dihydropterin (6-HMD), leading to 6-hydroxymethyl-7,8-dihydropterin diphosphate (6-HMDP). The protein is 6-hydroxymethyl-7,8-dihydropterin pyrophosphokinase of Methanocaldococcus jannaschii (strain ATCC 43067 / DSM 2661 / JAL-1 / JCM 10045 / NBRC 100440) (Methanococcus jannaschii).